The sequence spans 205 residues: Interleukin-6 (205 aa).

The N-terminal stretch at 1–21 (RFTSAFSLGLLLVTATAFPTP) is a signal peptide. Cysteines 64 and 70 form a disulfide. Position 73 is a phosphoserine (serine 73). A disulfide bond links cysteine 93 and cysteine 103. A glycan (N-linked (GlcNAc...) asparagine) is linked at asparagine 164.

The protein belongs to the IL-6 superfamily. In terms of assembly, component of a hexamer of two molecules each of IL6, IL6R and IL6ST; first binds to IL6R to associate with the signaling subunit IL6ST. Interacts with IL6R (via the N-terminal ectodomain); this interaction may be affected by IL6R-binding with SORL1, hence decreasing IL6 cis signaling. Interacts with SORL1 (via the N-terminal ectodomain); this interaction leads to IL6 internalization and lysosomal degradation. May form a trimeric complex with the soluble SORL1 ectodomain and soluble IL6R receptor; this interaction might stabilize circulating IL6, hence promoting IL6 trans signaling.

Its subcellular location is the secreted. Its function is as follows. Cytokine with a wide variety of biological functions in immunity, tissue regeneration, and metabolism. Binds to IL6R, then the complex associates to the signaling subunit IL6ST/gp130 to trigger the intracellular IL6-signaling pathway. The interaction with the membrane-bound IL6R and IL6ST stimulates 'classic signaling', whereas the binding of IL6 and soluble IL6R to IL6ST stimulates 'trans-signaling'. Alternatively, 'cluster signaling' occurs when membrane-bound IL6:IL6R complexes on transmitter cells activate IL6ST receptors on neighboring receiver cells. IL6 is a potent inducer of the acute phase response. Rapid production of IL6 contributes to host defense during infection and tissue injury, but excessive IL6 synthesis is involved in disease pathology. In the innate immune response, is synthesized by myeloid cells, such as macrophages and dendritic cells, upon recognition of pathogens through toll-like receptors (TLRs) at the site of infection or tissue injury. In the adaptive immune response, is required for the differentiation of B cells into immunoglobulin-secreting cells. Plays a major role in the differentiation of CD4(+) T cell subsets. Essential factor for the development of T follicular helper (Tfh) cells that are required for the induction of germinal-center formation. Required to drive naive CD4(+) T cells to the Th17 lineage. Also required for proliferation of myeloma cells and the survival of plasmablast cells. In terms of biological role, acts as an essential factor in bone homeostasis and on vessels directly or indirectly by induction of VEGF, resulting in increased angiogenesis activity and vascular permeability. Induces, through 'trans-signaling' and synergistically with IL1B and TNF, the production of VEGF. Involved in metabolic controls, is discharged into the bloodstream after muscle contraction increasing lipolysis and improving insulin resistance. 'Trans-signaling' in central nervous system also regulates energy and glucose homeostasis. Mediates, through GLP-1, crosstalk between insulin-sensitive tissues, intestinal L cells and pancreatic islets to adapt to changes in insulin demand. Also acts as a myokine. Plays a protective role during liver injury, being required for maintenance of tissue regeneration. Also has a pivotal role in iron metabolism by regulating HAMP/hepcidin expression upon inflammation or bacterial infection. Through activation of IL6ST-YAP-NOTCH pathway, induces inflammation-induced epithelial regeneration. The sequence is that of Interleukin-6 (IL6) from Orcinus orca (Killer whale).